The chain runs to 228 residues: Large ribosomal subunit protein uL1 (228 aa).

The protein belongs to the universal ribosomal protein uL1 family. In terms of assembly, part of the 50S ribosomal subunit.

In terms of biological role, binds directly to 23S rRNA. The L1 stalk is quite mobile in the ribosome, and is involved in E site tRNA release. Protein L1 is also a translational repressor protein, it controls the translation of the L11 operon by binding to its mRNA. The protein is Large ribosomal subunit protein uL1 of Clavibacter sepedonicus (Clavibacter michiganensis subsp. sepedonicus).